Here is a 302-residue protein sequence, read N- to C-terminus: Alpha-N-acetyl-neuraminyl-2,3-beta-galactosyl-1,3-N-acetyl-galactosaminide alpha-2,6-sialyltransferase (302 aa).

Residues 1–6 (MKAPGR) are Cytoplasmic-facing. A helical; Signal-anchor for type II membrane protein transmembrane segment spans residues 7-27 (LVLIILCSVVFSAVYILLCCW). Topologically, residues 28 to 302 (AGLPLCLATC…VFAHPSWRTE (275 aa)) are lumenal. Residues cysteine 76 and cysteine 225 are joined by a disulfide bond. A glycan (N-linked (GlcNAc...) asparagine) is linked at asparagine 135.

Belongs to the glycosyltransferase 29 family. Ubiquitous.

The protein resides in the golgi apparatus membrane. The catalysed reaction is an alpha-Neu5Ac-(2-&gt;3)-beta-D-Gal-(1-&gt;3)-D-GlcNAc derivative + CMP-N-acetyl-beta-neuraminate = an alpha-Neu5Ac-(2-&gt;3)-beta-D-Gal-(1-&gt;3)-[alpha-Neu5Ac-(2-&gt;6)]-D-GlcNAc derivative + CMP + H(+). It carries out the reaction N-acetyl-alpha-neuraminosyl-(2-&gt;3)-beta-D-galactosyl-(1-&gt;3)-N-acetyl-D-galactosamine + CMP-N-acetyl-beta-neuraminate = N-acetyl-alpha-neuraminosyl-(2-&gt;3)-beta-D-galactosyl-(1-&gt;3)-[N-acetyl-alpha-neuraminosyl-(2-&gt;6)]-N-acetyl-D-galactosamine + CMP + H(+). It catalyses the reaction a ganglioside GM1b (d18:1(4E)) + CMP-N-acetyl-beta-neuraminate = a ganglioside GD1alpha (d18:1(4E)) + CMP + H(+). The enzyme catalyses 3-O-[alpha-Neu5Ac-(2-&gt;3)-beta-D-Gal-(1-&gt;3)-alpha-D-GalNAc]-L-Ser-[protein] + CMP-N-acetyl-beta-neuraminate = a 3-O-{alpha-Neu5Ac-(2-&gt;3)-beta-D-Gal-(1-&gt;3)-[alpha-Neu5Ac-(2-&gt;6)]-alpha-D-GalNAc}-L-seryl-[protein] + CMP + H(+). The catalysed reaction is 3-O-[alpha-Neu5Ac-(2-&gt;3)-beta-D-Gal-(1-&gt;3)-alpha-D-GalNAc]-L-Thr-[protein] + CMP-N-acetyl-beta-neuraminate = a 3-O-{alpha-Neu5Ac-(2-&gt;3)-beta-D-Gal-(1-&gt;3)-[alpha-Neu5Ac-(2-&gt;6)]-alpha-D-GalNAc}-L-threonyl-[protein] + CMP + H(+). The protein operates within protein modification; protein glycosylation. Its pathway is glycolipid biosynthesis. Functionally, transfers the sialyl group (N-acetyl-alpha-neuraminyl or NeuAc) from CMP-NeuAc to the GalNAc residue on the NeuAc-alpha-2,3-Gal-beta-1,3-GalNAc sequence of glycoproteins and glycolipids forming an alpha-2,6-linkage. Produces branched type disialyl structures by transfer of a sialyl group onto a GalNAc residue inside the backbone core chains. Prefers O-glycans to glycoproteins or glycolipids. This is Alpha-N-acetyl-neuraminyl-2,3-beta-galactosyl-1,3-N-acetyl-galactosaminide alpha-2,6-sialyltransferase (ST6GALNAC4) from Homo sapiens (Human).